The following is a 444-amino-acid chain: Cadaverine/lysine antiporter (444 aa).

Transmembrane regions (helical) follow at residues 7–27, 35–55, 95–115, 123–143, 149–169, 193–213, 222–242, 273–293, 323–343, 354–374, 384–404, and 405–425; these read IGLFACTGVVAGNMMGSGIAL, IGGIAIWGWIISIIGAMSLAY, IGNLAIGITAVSYLSTFFPVL, IACIAIVWVFTFVNMLGGTWV, IGLVLVLIPVVMTAIVGWHWF, ILLCLWAFVGVESAAVSTGMV, LATMLGTGLAGIVYIAATQVL, LVSAFTAFACLTSLGSWMMLV, LLLAAVKMTALMILITLMNSA, LTGIAVLLTMLPYFYSCVDLI, FVSLICSVLGCVFCFIALMGA, and SSFELAGTFIVSLIILMFYAR.

This sequence belongs to the amino acid-polyamine-organocation (APC) superfamily. Basic amino acid/polyamine antiporter (APA) (TC 2.A.3.2) family.

Its subcellular location is the cell inner membrane. The catalysed reaction is cadaverine(in) + L-lysine(out) = cadaverine(out) + L-lysine(in). Functionally, under acidic conditions, in the presence of lysine, functions as a cadaverine:lysine antiporter that facilitates the excretion of cadaverine and the uptake of lysine. The sequence is that of Cadaverine/lysine antiporter (cadB) from Escherichia coli O157:H7.